Consider the following 28-residue polypeptide: Dermaseptin-1 (28 aa).

Gln-28 is modified (glutamine amide).

As to expression, expressed by the skin glands.

Its subcellular location is the secreted. Has antimicrobial activity. In Phyllomedusa tomopterna (Tiger-striped leaf frog), this protein is Dermaseptin-1.